A 462-amino-acid polypeptide reads, in one-letter code: MSNGFIVQIIGAVVDIEFPQDAVPQVYDALKVVSEGQGQGLVLEVQQQIGGGVVRCITMGSSDGLRRGLEVVNSGKSIQVPVGVSTLGRIMNVLGDPIDEKGPIGEEERWSIHRAAPSYEDQSNSNDLLETGIKVIDLVCPFAKGGKVGLFGGAGVGKTVNMMELIRNIAIEHSGYSVFAGVGERTREGNDFYHEMMESNVLDKVSLVYGQMNEPPGNRLRVALTGLTMAEKFRDEGRDVLFFVDNIYRYTLAGTEVSALLGRMPSAVGYQPTLAEEMGVLQERITSTKTGSITSVQAVYVPADDLTDPSPATTFAHLDATVVLSRQIAALGIYPAVDPLDSTSRQLDPLVVGKEHYETARGVQTVLQRYKELKDIIAILGMDELSEEDKLTVARARKIERFLSQPFFVAEVFTGSPGKYVPLKETIRGFQGILKGEYDDLPEQAFYMVGSIDEVVEKAKKL.

Residue 152–159 participates in ATP binding; that stretch reads GGAGVGKT.

Belongs to the ATPase alpha/beta chains family. As to quaternary structure, F-type ATPases have 2 components, CF(1) - the catalytic core - and CF(0) - the membrane proton channel. CF(1) has five subunits: alpha(3), beta(3), gamma(1), delta(1), epsilon(1). CF(0) has three main subunits: a(1), b(2) and c(9-12). The alpha and beta chains form an alternating ring which encloses part of the gamma chain. CF(1) is attached to CF(0) by a central stalk formed by the gamma and epsilon chains, while a peripheral stalk is formed by the delta and b chains.

Its subcellular location is the cell inner membrane. The enzyme catalyses ATP + H2O + 4 H(+)(in) = ADP + phosphate + 5 H(+)(out). Functionally, produces ATP from ADP in the presence of a proton gradient across the membrane. The catalytic sites are hosted primarily by the beta subunits. In Aeromonas hydrophila subsp. hydrophila (strain ATCC 7966 / DSM 30187 / BCRC 13018 / CCUG 14551 / JCM 1027 / KCTC 2358 / NCIMB 9240 / NCTC 8049), this protein is ATP synthase subunit beta.